The sequence spans 424 residues: UDP-N-acetylglucosamine 1-carboxyvinyltransferase (424 aa).

Residue 22-23 (KN) participates in phosphoenolpyruvate binding. Arg95 contributes to the UDP-N-acetyl-alpha-D-glucosamine binding site. Cys119 serves as the catalytic Proton donor. The residue at position 119 (Cys119) is a 2-(S-cysteinyl)pyruvic acid O-phosphothioketal. Residues 124–128 (RPVDQ), Asp311, and Ile333 contribute to the UDP-N-acetyl-alpha-D-glucosamine site.

This sequence belongs to the EPSP synthase family. MurA subfamily.

The protein resides in the cytoplasm. The catalysed reaction is phosphoenolpyruvate + UDP-N-acetyl-alpha-D-glucosamine = UDP-N-acetyl-3-O-(1-carboxyvinyl)-alpha-D-glucosamine + phosphate. It participates in cell wall biogenesis; peptidoglycan biosynthesis. Cell wall formation. Adds enolpyruvyl to UDP-N-acetylglucosamine. The protein is UDP-N-acetylglucosamine 1-carboxyvinyltransferase of Polaromonas sp. (strain JS666 / ATCC BAA-500).